The chain runs to 158 residues: NAD(P)H-quinone oxidoreductase subunit J, chloroplastic (158 aa).

The protein belongs to the complex I 30 kDa subunit family. As to quaternary structure, NDH is composed of at least 16 different subunits, 5 of which are encoded in the nucleus.

The protein resides in the plastid. Its subcellular location is the chloroplast thylakoid membrane. The enzyme catalyses a plastoquinone + NADH + (n+1) H(+)(in) = a plastoquinol + NAD(+) + n H(+)(out). The catalysed reaction is a plastoquinone + NADPH + (n+1) H(+)(in) = a plastoquinol + NADP(+) + n H(+)(out). In terms of biological role, NDH shuttles electrons from NAD(P)H:plastoquinone, via FMN and iron-sulfur (Fe-S) centers, to quinones in the photosynthetic chain and possibly in a chloroplast respiratory chain. The immediate electron acceptor for the enzyme in this species is believed to be plastoquinone. Couples the redox reaction to proton translocation, and thus conserves the redox energy in a proton gradient. This chain is NAD(P)H-quinone oxidoreductase subunit J, chloroplastic, found in Acorus calamus var. americanus (American sweet flag).